The primary structure comprises 802 residues: Protein SBE22 (802 aa).

2 disordered regions span residues 207–230 (SSTINANNMKSTGTLPPFRPRSNS) and 323–345 (SGDPKHVRSHQSKPQPRFPQRHN).

Belongs to the SBE2 family.

It localises to the cytoplasm. Its subcellular location is the golgi apparatus. In terms of biological role, with SBE2, is involved in cell wall integrity and polarity processes like bud growth. In Vanderwaltozyma polyspora (strain ATCC 22028 / DSM 70294 / BCRC 21397 / CBS 2163 / NBRC 10782 / NRRL Y-8283 / UCD 57-17) (Kluyveromyces polysporus), this protein is Protein SBE22 (SBE22).